The sequence spans 90 residues: Small ribosomal subunit protein uS15c (90 aa).

The protein belongs to the universal ribosomal protein uS15 family. As to quaternary structure, part of the 30S ribosomal subunit.

The protein resides in the plastid. It localises to the chloroplast. This Glycine max (Soybean) protein is Small ribosomal subunit protein uS15c (rps15).